Here is a 321-residue protein sequence, read N- to C-terminus: WD repeat-containing protein VIP3 (321 aa).

WD repeat units lie at residues 12-55 (AHED…LVRT), 58-97 (GHSL…TIAV), 100-140 (APPS…LIST), 156-195 (SSKK…LLHQ), 198-238 (GHNM…LLGS), 241-280 (GHTS…AIQT), and 283-319 (NHND…SLYD).

In terms of assembly, component of the nuclear PAF1 complex (PAF1C), which consists of VIP2/ELF7/PAF1, VIP3/SKI8/WDR61, VIP4/LEO1, VIP5/RTF1, VIP6/ELF8/CTR9 and CDC73. Component of the cytoplasmic SKI complex, which consists of SKI2, SKI3 and VIP3/SKI8. Interacts with VIP4 and VIP6.

It localises to the nucleus. Its subcellular location is the cytoplasm. Its function is as follows. Component of the PAF1 complex (PAF1C) which is involved in histone modifications such as methylation on histone H3 'Lys-4' (H3K4me3). Involved in regulation of flowering time. Required for the expression of the flowering repressor and MADS box gene FLC. Required for histone H3 trimethylation on 'Lys-4' (H3K4me3) and histone dimethylation on 'Lys-36' (H3K36me2) at the FLC locus. Prevents trimethylation on 'Lys-27' (H3K27me3) at the same locus. Not required for meiotic recombination or progression. Component of the SKI complex which is thought to be involved in exosome-mediated RNA decay and associates with transcriptionally active genes in a manner dependent on PAF1 complex (PAF1C). Required for proper progression of cell differentiation process. The polypeptide is WD repeat-containing protein VIP3 (Arabidopsis thaliana (Mouse-ear cress)).